The following is a 37-amino-acid chain: Cytochrome b6-f complex subunit 5 (37 aa).

The chain crosses the membrane as a helical span at residues 5–25 (LLSGVVLGLILVTLSGLFFAA).

The protein belongs to the PetG family. As to quaternary structure, the 4 large subunits of the cytochrome b6-f complex are cytochrome b6, subunit IV (17 kDa polypeptide, PetD), cytochrome f and the Rieske protein, while the 4 small subunits are PetG, PetL, PetM and PetN. The complex functions as a dimer.

It is found in the cellular thylakoid membrane. Functionally, component of the cytochrome b6-f complex, which mediates electron transfer between photosystem II (PSII) and photosystem I (PSI), cyclic electron flow around PSI, and state transitions. PetG is required for either the stability or assembly of the cytochrome b6-f complex. The chain is Cytochrome b6-f complex subunit 5 from Trichodesmium erythraeum (strain IMS101).